A 901-amino-acid polypeptide reads, in one-letter code: Protein translocase subunit SecA (901 aa).

Residues glutamine 87, glycine 105–threonine 109, and aspartate 512 each bind ATP. Residues serine 858 to lysine 891 are disordered. Cysteine 885, cysteine 887, cysteine 896, and histidine 897 together coordinate Zn(2+).

This sequence belongs to the SecA family. As to quaternary structure, monomer and homodimer. Part of the essential Sec protein translocation apparatus which comprises SecA, SecYEG and auxiliary proteins SecDF-YajC and YidC. The cofactor is Zn(2+).

It is found in the cell inner membrane. Its subcellular location is the cytoplasm. The enzyme catalyses ATP + H2O + cellular proteinSide 1 = ADP + phosphate + cellular proteinSide 2.. In terms of biological role, part of the Sec protein translocase complex. Interacts with the SecYEG preprotein conducting channel. Has a central role in coupling the hydrolysis of ATP to the transfer of proteins into and across the cell membrane, serving both as a receptor for the preprotein-SecB complex and as an ATP-driven molecular motor driving the stepwise translocation of polypeptide chains across the membrane. This is Protein translocase subunit SecA from Escherichia fergusonii (strain ATCC 35469 / DSM 13698 / CCUG 18766 / IAM 14443 / JCM 21226 / LMG 7866 / NBRC 102419 / NCTC 12128 / CDC 0568-73).